The following is a 305-amino-acid chain: NAD kinase 2 (305 aa).

Asp-78 serves as the catalytic Proton acceptor. NAD(+) contacts are provided by residues Asp-78–Gly-79, Asn-152–Glu-153, Asp-182, Thr-193–Ser-198, and Asn-251.

The protein belongs to the NAD kinase family. It depends on a divalent metal cation as a cofactor.

It is found in the cytoplasm. It catalyses the reaction NAD(+) + ATP = ADP + NADP(+) + H(+). Involved in the regulation of the intracellular balance of NAD and NADP, and is a key enzyme in the biosynthesis of NADP. Catalyzes specifically the phosphorylation on 2'-hydroxyl of the adenosine moiety of NAD to yield NADP. The sequence is that of NAD kinase 2 from Synechococcus sp. (strain ATCC 27144 / PCC 6301 / SAUG 1402/1) (Anacystis nidulans).